The chain runs to 71 residues: UPF0435 protein SE_1565 (71 aa).

It belongs to the UPF0435 family.

The protein is UPF0435 protein SE_1565 of Staphylococcus epidermidis (strain ATCC 12228 / FDA PCI 1200).